Here is a 297-residue protein sequence, read N- to C-terminus: Phosphoribosylaminoimidazole-succinocarboxamide synthase (297 aa).

It belongs to the SAICAR synthetase family.

It carries out the reaction 5-amino-1-(5-phospho-D-ribosyl)imidazole-4-carboxylate + L-aspartate + ATP = (2S)-2-[5-amino-1-(5-phospho-beta-D-ribosyl)imidazole-4-carboxamido]succinate + ADP + phosphate + 2 H(+). It functions in the pathway purine metabolism; IMP biosynthesis via de novo pathway; 5-amino-1-(5-phospho-D-ribosyl)imidazole-4-carboxamide from 5-amino-1-(5-phospho-D-ribosyl)imidazole-4-carboxylate: step 1/2. The sequence is that of Phosphoribosylaminoimidazole-succinocarboxamide synthase (purC) from Mycobacterium leprae (strain TN).